Reading from the N-terminus, the 151-residue chain is UPF0208 membrane protein YfbV (151 aa).

The Cytoplasmic segment spans residues 1-45 (MSTPDNRSVNFFSLFCRGQHYSKTWPLEKRLAPVFVENRVIKMTR). A helical transmembrane segment spans residues 46–65 (YAIRFMPPIAVFTLCWQIAL). The Periplasmic segment spans residues 66 to 68 (GGQ). A helical transmembrane segment spans residues 69 to 91 (LGPAVATALFALSLPMQGLWWLG). The Cytoplasmic portion of the chain corresponds to 92–151 (KRSVTPLPPAILNWFYEVRGKLQESGQVLAPVEGKPDYQALADTLKRAFKQLDKTFLDDL).

This sequence belongs to the UPF0208 family.

The protein localises to the cell inner membrane. The protein is UPF0208 membrane protein YfbV (yfbV) of Escherichia coli O6:H1 (strain CFT073 / ATCC 700928 / UPEC).